The primary structure comprises 268 residues: Undecaprenyl-diphosphatase (268 aa).

Transmembrane regions (helical) follow at residues 47-67 (FAVL…FSKL), 85-105 (IGVL…GGLI), 109-129 (LFNP…LLWV), 144-164 (FPLP…FPGV), 184-204 (AAEF…VYDL), 217-237 (LIVA…VKTF), and 246-266 (FALF…ALAL).

This sequence belongs to the UppP family.

It is found in the cell inner membrane. It carries out the reaction di-trans,octa-cis-undecaprenyl diphosphate + H2O = di-trans,octa-cis-undecaprenyl phosphate + phosphate + H(+). Its function is as follows. Catalyzes the dephosphorylation of undecaprenyl diphosphate (UPP). Confers resistance to bacitracin. This chain is Undecaprenyl-diphosphatase, found in Rhodopseudomonas palustris (strain BisA53).